The chain runs to 169 residues: Peptide methionine sulfoxide reductase MsrA (169 aa).

Cys-13 is a catalytic residue.

The protein belongs to the MsrA Met sulfoxide reductase family.

It catalyses the reaction L-methionyl-[protein] + [thioredoxin]-disulfide + H2O = L-methionyl-(S)-S-oxide-[protein] + [thioredoxin]-dithiol. The catalysed reaction is [thioredoxin]-disulfide + L-methionine + H2O = L-methionine (S)-S-oxide + [thioredoxin]-dithiol. In terms of biological role, has an important function as a repair enzyme for proteins that have been inactivated by oxidation. Catalyzes the reversible oxidation-reduction of methionine sulfoxide in proteins to methionine. The chain is Peptide methionine sulfoxide reductase MsrA from Mycolicibacterium gilvum (strain PYR-GCK) (Mycobacterium gilvum (strain PYR-GCK)).